Consider the following 138-residue polypeptide: Large ribosomal subunit protein uL16 (138 aa).

Residues 1–15 (MLSPKKVKYRKKQRG) show a composition bias toward basic residues. The segment at 1–20 (MLSPKKVKYRKKQRGRLSGE) is disordered.

The protein belongs to the universal ribosomal protein uL16 family. In terms of assembly, part of the 50S ribosomal subunit.

In terms of biological role, binds 23S rRNA and is also seen to make contacts with the A and possibly P site tRNAs. The sequence is that of Large ribosomal subunit protein uL16 from Borrelia hermsii (strain HS1 / DAH).